Reading from the N-terminus, the 233-residue chain is Orotate phosphoribosyltransferase (233 aa).

Residue Lys-29 participates in 5-phospho-alpha-D-ribose 1-diphosphate binding. An orotate-binding site is contributed by 37–38; it reads FF. 5-phospho-alpha-D-ribose 1-diphosphate-binding positions include 79-80, Arg-109, Lys-110, Lys-113, His-115, and 135-143; these read YK and DDVITAGTA. The orotate site is built by Thr-139 and Arg-167.

This sequence belongs to the purine/pyrimidine phosphoribosyltransferase family. PyrE subfamily. As to quaternary structure, homodimer.

It catalyses the reaction orotidine 5'-phosphate + diphosphate = orotate + 5-phospho-alpha-D-ribose 1-diphosphate. Its pathway is pyrimidine metabolism; UMP biosynthesis via de novo pathway; UMP from orotate: step 1/2. Functionally, catalyzes the transfer of a ribosyl phosphate group from 5-phosphoribose 1-diphosphate to orotate, leading to the formation of orotidine monophosphate (OMP). The sequence is that of Orotate phosphoribosyltransferase (ura-5) from Neurospora crassa (strain ATCC 24698 / 74-OR23-1A / CBS 708.71 / DSM 1257 / FGSC 987).